The primary structure comprises 465 residues: Uridine kinase-like protein 5 (465 aa).

The segment at 26–230 is uridine kinase; it reads LKQPFVIGVA…IVQHIRTKLC (205 aa). Residues 240–465 form a uracil phosphoribosyltransferase region; it reads NIFIISSTFQ…SLSTNLKLRS (226 aa). GTP is bound by residues Lys-264, Arg-273, and 307-310; that span reads CKRL. Positions 317 and 342 each coordinate 5-phospho-alpha-D-ribose 1-diphosphate. Arg-362 provides a ligand contact to GTP. 5-phospho-alpha-D-ribose 1-diphosphate is bound by residues Asp-368, 373 to 376, and Glu-439; that span reads SGYS. 438-440 lines the uracil pocket; the sequence is GEF.

In the N-terminal section; belongs to the uridine kinase family. It in the C-terminal section; belongs to the UPRTase family. It depends on Mg(2+) as a cofactor.

It carries out the reaction UMP + diphosphate = 5-phospho-alpha-D-ribose 1-diphosphate + uracil. The enzyme catalyses cytidine + ATP = CMP + ADP + H(+). The catalysed reaction is uridine + ATP = UMP + ADP + H(+). Its pathway is pyrimidine metabolism; UMP biosynthesis via salvage pathway; UMP from uracil: step 1/1. It participates in pyrimidine metabolism; CTP biosynthesis via salvage pathway; CTP from cytidine: step 1/3. It functions in the pathway pyrimidine metabolism; UMP biosynthesis via salvage pathway; UMP from uridine: step 1/1. Its activity is regulated as follows. Allosterically activated by GTP. In terms of biological role, involved in the pyrimidine salvage pathway. This is Uridine kinase-like protein 5 (UKL5) from Arabidopsis thaliana (Mouse-ear cress).